The chain runs to 252 residues: Adenosylcobinamide-GDP ribazoletransferase (252 aa).

7 helical membrane-spanning segments follow: residues 4–24, 38–58, 60–80, 113–133, 141–161, 190–210, and 232–252; these read LFKGLMMSLSMFTIIPMPYVE, PIIGLIVGCVWFLGYKLINYL, ISIVLKSALIMIIPFIITGML, FSVISVIILFFIQFGAVHSFL, ILMFLPIISRNIVAYFFITII, LVCILFGIILGYIGIVILLIV, and VAGFSLVVGELVGLFSACLFT.

The protein belongs to the CobS family. Mg(2+) is required as a cofactor.

The protein localises to the cell membrane. It catalyses the reaction alpha-ribazole + adenosylcob(III)inamide-GDP = adenosylcob(III)alamin + GMP + H(+). The catalysed reaction is alpha-ribazole 5'-phosphate + adenosylcob(III)inamide-GDP = adenosylcob(III)alamin 5'-phosphate + GMP + H(+). It functions in the pathway cofactor biosynthesis; adenosylcobalamin biosynthesis; adenosylcobalamin from cob(II)yrinate a,c-diamide: step 7/7. Functionally, joins adenosylcobinamide-GDP and alpha-ribazole to generate adenosylcobalamin (Ado-cobalamin). Also synthesizes adenosylcobalamin 5'-phosphate from adenosylcobinamide-GDP and alpha-ribazole 5'-phosphate. This Clostridium botulinum (strain Eklund 17B / Type B) protein is Adenosylcobinamide-GDP ribazoletransferase.